A 355-amino-acid chain; its full sequence is Phosphoserine aminotransferase (355 aa).

Arginine 41 contributes to the L-glutamate binding site. Pyridoxal 5'-phosphate is bound by residues 75 to 76, tryptophan 99, threonine 147, aspartate 166, and glutamine 189; that span reads AS. Residue lysine 190 is modified to N6-(pyridoxal phosphate)lysine. 231-232 provides a ligand contact to pyridoxal 5'-phosphate; sequence NT.

The protein belongs to the class-V pyridoxal-phosphate-dependent aminotransferase family. SerC subfamily. In terms of assembly, homodimer. Pyridoxal 5'-phosphate serves as cofactor.

Its subcellular location is the cytoplasm. It carries out the reaction O-phospho-L-serine + 2-oxoglutarate = 3-phosphooxypyruvate + L-glutamate. The catalysed reaction is 4-(phosphooxy)-L-threonine + 2-oxoglutarate = (R)-3-hydroxy-2-oxo-4-phosphooxybutanoate + L-glutamate. It participates in amino-acid biosynthesis; L-serine biosynthesis; L-serine from 3-phospho-D-glycerate: step 2/3. It functions in the pathway cofactor biosynthesis; pyridoxine 5'-phosphate biosynthesis; pyridoxine 5'-phosphate from D-erythrose 4-phosphate: step 3/5. Functionally, catalyzes the reversible conversion of 3-phosphohydroxypyruvate to phosphoserine and of 3-hydroxy-2-oxo-4-phosphonooxybutanoate to phosphohydroxythreonine. This is Phosphoserine aminotransferase from Parabacteroides distasonis (strain ATCC 8503 / DSM 20701 / CIP 104284 / JCM 5825 / NCTC 11152).